The primary structure comprises 126 residues: MSDSHHKPVWDRTHHAKMATGIGDPQCFKGMAGKSKFNVGDRVRIKDLPDLFYTRTMTYTRGATGTIVRLVYESPAAEDEAFGNEENVEWFYSIVFAQKDLWPEYSDTFANDTLETEIPERYLEKA.

As to quaternary structure, heterododecamer consisting of 4 alpha, 4 beta, and 4 gamma subunits.

It carries out the reaction thiocyanate + H2O + 2 H(+) = carbonyl sulfide + NH4(+). It functions in the pathway organosulfur degradation; thiocyanate degradation. Functionally, involved in the degradation of thiocyanate. The polypeptide is Thiocyanate hydrolase subunit alpha (scnA) (Thiobacillus thioparus).